We begin with the raw amino-acid sequence, 178 residues long: Probable chorismate pyruvate-lyase (178 aa).

Substrate is bound by residues Arg-72, Leu-110, and Glu-169.

It belongs to the UbiC family.

It is found in the cytoplasm. The enzyme catalyses chorismate = 4-hydroxybenzoate + pyruvate. The protein operates within cofactor biosynthesis; ubiquinone biosynthesis. In terms of biological role, removes the pyruvyl group from chorismate, with concomitant aromatization of the ring, to provide 4-hydroxybenzoate (4HB) for the ubiquinone pathway. The chain is Probable chorismate pyruvate-lyase from Nitrosomonas eutropha (strain DSM 101675 / C91 / Nm57).